The primary structure comprises 274 residues: Large ribosomal subunit protein uL2 (274 aa).

A disordered region spans residues 223–257; that stretch reads VAMNPVDHPHGGGEGRTSGGRHPVTPWGIPTKGYK.

The protein belongs to the universal ribosomal protein uL2 family. As to quaternary structure, part of the 50S ribosomal subunit. Forms a bridge to the 30S subunit in the 70S ribosome.

Functionally, one of the primary rRNA binding proteins. Required for association of the 30S and 50S subunits to form the 70S ribosome, for tRNA binding and peptide bond formation. It has been suggested to have peptidyltransferase activity; this is somewhat controversial. Makes several contacts with the 16S rRNA in the 70S ribosome. In Geobacter sulfurreducens (strain ATCC 51573 / DSM 12127 / PCA), this protein is Large ribosomal subunit protein uL2.